A 185-amino-acid chain; its full sequence is Fimbrial subunit type 1 (185 aa).

The signal sequence occupies residues 1 to 22 (MRHKLMTSTIASLMFVAAAAVA). C46 and C86 are disulfide-bonded.

This sequence belongs to the fimbrial protein family.

It localises to the fimbrium. This Salmonella typhimurium protein is Fimbrial subunit type 1.